A 259-amino-acid chain; its full sequence is (3R)-3-hydroxyacyl-CoA dehydrogenase (259 aa).

Residues 13–21 and 40–41 each bind NAD(+); these read LVTGAGSGI and DL. The residue at position 58 (S58) is a Phosphoserine. K66 bears the N6-acetyllysine mark. 72 to 74 contributes to the NAD(+) binding site; that stretch reads ADV. S154 contributes to the substrate binding site. N6-succinyllysine is present on K158. The active-site Proton acceptor is the Y167. Residues 167–171 and 200–202 each bind NAD(+); these read YASSK and IAT. N6-succinyllysine is present on K171.

The protein belongs to the short-chain dehydrogenases/reductases (SDR) family. In terms of assembly, heterotetramer with CBR4; contains two molecules of HSD17B8 and CBR4. As to expression, kidney, liver, testis, ovary and spleen. Oviduct, uterus, mammary gland, vagina, prostate, clitoral gland and moderately heart, dorsal skin, brain and lung.

It localises to the mitochondrion matrix. The enzyme catalyses a (3R)-3-hydroxyacyl-CoA + NAD(+) = a 3-oxoacyl-CoA + NADH + H(+). The catalysed reaction is 17beta-estradiol + NAD(+) = estrone + NADH + H(+). It catalyses the reaction testosterone + NAD(+) = androst-4-ene-3,17-dione + NADH + H(+). It carries out the reaction 17beta-hydroxy-5alpha-androstan-3-one + NAD(+) = 5alpha-androstan-3,17-dione + NADH + H(+). It participates in lipid metabolism; fatty acid biosynthesis. Its pathway is steroid biosynthesis; estrogen biosynthesis. The protein operates within lipid metabolism; mitochondrial fatty acid beta-oxidation. Its function is as follows. Required for the solubility and assembly of the heterotetramer 3-ketoacyl-[acyl carrier protein] (ACP) reductase functional complex (KAR or KAR1) that forms part of the mitochondrial fatty acid synthase (mtFAS). Alpha-subunit of the KAR complex, acts as scaffold protein, required for the stability of carbonyl reductase type-4 (CBR4, beta-subunit of the KAR complex) and for its 3-ketoacyl-ACP reductase activity, thereby participating in mitochondrial fatty acid biosynthesis. Catalyzes the NAD-dependent conversion of (3R)-3-hydroxyacyl-CoA into 3-ketoacyl-CoA (3-oxoacyl-CoA) with no chain length preference, this enzymatic activity is not needed for the KAR function. Prefers (3R)-3-hydroxyacyl-CoA over (3S)-3-hydroxyacyl-CoA and displays enzymatic activity only in the presence of NAD(+)(H). Cooperates with enoyl-CoA hydratase 1 in mitochondria, together they constitute an alternative route to the auxiliary enzyme pathways for the breakdown of Z-PUFA (cis polyunsaturated fatty acid) enoyl-esters. NAD-dependent 17-beta-hydroxysteroid dehydrogenase with highest activity towards estradiol. It efficiently catalyzes the oxidation of estradiol (E2), testosterone, and dihydrotestosterone. Primarily an oxidative enzyme, it can switch to a reductive mode determined in the appropriate physiologic milieu and catalyze the reduction of estrone (E1) to form biologically active estradiol (E2). This chain is (3R)-3-hydroxyacyl-CoA dehydrogenase (Hsd17b8), found in Mus musculus (Mouse).